The sequence spans 357 residues: tRNA N6-adenosine threonylcarbamoyltransferase (357 aa).

2 residues coordinate Fe cation: H116 and H120. Residues 139-143, D172, G185, and N284 each bind substrate; that span reads LVSGG. D312 provides a ligand contact to Fe cation.

It belongs to the KAE1 / TsaD family. Fe(2+) is required as a cofactor.

The protein resides in the cytoplasm. The catalysed reaction is L-threonylcarbamoyladenylate + adenosine(37) in tRNA = N(6)-L-threonylcarbamoyladenosine(37) in tRNA + AMP + H(+). Its function is as follows. Required for the formation of a threonylcarbamoyl group on adenosine at position 37 (t(6)A37) in tRNAs that read codons beginning with adenine. Is involved in the transfer of the threonylcarbamoyl moiety of threonylcarbamoyl-AMP (TC-AMP) to the N6 group of A37, together with TsaE and TsaB. TsaD likely plays a direct catalytic role in this reaction. The sequence is that of tRNA N6-adenosine threonylcarbamoyltransferase from Synechococcus sp. (strain CC9605).